Reading from the N-terminus, the 758-residue chain is Glucan endo-1,3-beta-D-glucosidase (758 aa).

The tat-type signal signal peptide spans 1–34 (MSHASRRRWRRATTSAATAALLCGALLTFPSAPA). The segment at 38 to 251 (VRLGSGSYTT…SGYASVALLP (214 aa)) is beta-sandwich subdomain. The GH81 domain occupies 38–704 (VRLGSGSYTT…QWLSTLAEFG (667 aa)). Residues 252-342 (SPDDFDRYAP…EGDRFTTELT (91 aa)) form an alpha/beta subdomain region. The segment at 352-704 (TVDSADHQRL…QWLSTLAEFG (353 aa)) is (alpha/beta)6 barrel subdomain. Residues Tyr-382, Lys-386, Asp-457, His-461, Asn-532, Glu-534, and Glu-538 each contribute to the (1,3-beta-D-glucosyl)n site. Asp-457 is a catalytic residue. Active-site residues include Glu-534 and Glu-538.

Belongs to the glycosyl hydrolase 81 family. Predicted to be exported by the Tat system. The position of the signal peptide cleavage has not been experimentally proven.

It is found in the secreted. The catalysed reaction is Hydrolysis of (1-&gt;3)-beta-D-glucosidic linkages in (1-&gt;3)-beta-D-glucans.. Its function is as follows. Cleaves internal linkages in 1,3-beta-glucan. May contribute to biomass degradation by hydrolyzing the 1,3-beta-linked plant polymer callose that is present in decomposing plant tissue. This is Glucan endo-1,3-beta-D-glucosidase from Thermobifida fusca (strain YX).